A 476-amino-acid chain; its full sequence is Proline dehydrogenase 2, mitochondrial (476 aa).

The N-terminal 29 residues, 1 to 29 (MANRFLRPNLIHRFSTVSPVGPPTTIIPE), are a transit peptide targeting the mitochondrion.

The protein belongs to the proline oxidase family. FAD is required as a cofactor. Expressed in the vascular tissue and in the abscission zone of petals, sepals, stamina, pistils and siliques. Not detected in petioles.

It localises to the mitochondrion. It carries out the reaction L-proline + a quinone = (S)-1-pyrroline-5-carboxylate + a quinol + H(+). The protein operates within amino-acid degradation; L-proline degradation into L-glutamate; L-glutamate from L-proline: step 1/2. Functionally, converts proline to delta-1-pyrroline-5-carboxylate. The sequence is that of Proline dehydrogenase 2, mitochondrial (POX2) from Arabidopsis thaliana (Mouse-ear cress).